A 128-amino-acid chain; its full sequence is uncharacterized protein (128 aa).

2 helical membrane passes run 33-53 (LLYISIIFLFLNYVVDIVCYV) and 61-81 (FFCWVFLNLGVIGIIITVIIY). Polar residues predominate over residues 99–120 (DSLNQNVGESQSNEPPKYTSTF). The segment at 99–128 (DSLNQNVGESQSNEPPKYTSTFMDELDKQD) is disordered.

It is found in the membrane. This is an uncharacterized protein from Schizosaccharomyces pombe (strain 972 / ATCC 24843) (Fission yeast).